Consider the following 229-residue polypeptide: Putative N-acetylmannosamine-6-phosphate 2-epimerase (229 aa).

The protein belongs to the NanE family.

It carries out the reaction an N-acyl-D-glucosamine 6-phosphate = an N-acyl-D-mannosamine 6-phosphate. It participates in amino-sugar metabolism; N-acetylneuraminate degradation; D-fructose 6-phosphate from N-acetylneuraminate: step 3/5. Its function is as follows. Converts N-acetylmannosamine-6-phosphate (ManNAc-6-P) to N-acetylglucosamine-6-phosphate (GlcNAc-6-P). The protein is Putative N-acetylmannosamine-6-phosphate 2-epimerase of Shigella flexneri serotype 5b (strain 8401).